Reading from the N-terminus, the 656-residue chain is Pentatricopeptide repeat-containing protein At1g62260, mitochondrial (656 aa).

15 PPR repeats span residues 70-104, 105-134, 135-169, 170-200, 203-227, 234-264, 280-310, 311-345, 346-372, 373-407, 408-438, 442-472, 474-508, 509-544, and 545-575; these read NTVT…DVVT, WNTM…MPSR, DSFS…NAVS, WSAM…DSSP, ALVA…YGSL, LVYA…IPDL, NVVS…MKDR, DTIS…DAHS, WNMM…TPEK, HTVS…GEKP, DPHT…VVKT, DVPV…MKLK, EVIT…GIYP, SHIT…KIEP, and QMEH…MPFE. A type E motif region spans residues 580 to 655; it reads VWGALLDACR…ERGSSWVDSS (76 aa).

The protein belongs to the PPR family. PCMP-E subfamily.

The protein resides in the mitochondrion. This Arabidopsis thaliana (Mouse-ear cress) protein is Pentatricopeptide repeat-containing protein At1g62260, mitochondrial (PCMP-E10).